Here is a 252-residue protein sequence, read N- to C-terminus: Cytochrome c oxidase subunit 2 (252 aa).

At 1 to 39 (MFLIMLKGHILMDAPTPWGIFFQDSASPQMEGIMELHNN) the chain is on the mitochondrial intermembrane side. A helical transmembrane segment spans residues 40-59 (IMFYLAIILFTVTWMMITII). The Mitochondrial matrix portion of the chain corresponds to 60–81 (RNFVAKKSPIAHKYMNHGTLIE). Residues 82-105 (LIWTITPAFILILIAFPSFKLLYL) traverse the membrane as a helical segment. Residues 106–252 (MDEVMDPSLV…LLWLRDQMEG (147 aa)) are Mitochondrial intermembrane-facing. Residues H184, C219, E221, C223, H227, and M230 each coordinate Cu cation. E221 contacts Mg(2+).

Belongs to the cytochrome c oxidase subunit 2 family. Component of the cytochrome c oxidase (complex IV, CIV), a multisubunit enzyme composed of a catalytic core of 3 subunits and several supernumerary subunits. The complex exists as a monomer or a dimer and forms supercomplexes (SCs) in the inner mitochondrial membrane with ubiquinol-cytochrome c oxidoreductase (cytochrome b-c1 complex, complex III, CIII). Cu cation is required as a cofactor.

The protein resides in the mitochondrion inner membrane. The catalysed reaction is 4 Fe(II)-[cytochrome c] + O2 + 8 H(+)(in) = 4 Fe(III)-[cytochrome c] + 2 H2O + 4 H(+)(out). Functionally, component of the cytochrome c oxidase, the last enzyme in the mitochondrial electron transport chain which drives oxidative phosphorylation. The respiratory chain contains 3 multisubunit complexes succinate dehydrogenase (complex II, CII), ubiquinol-cytochrome c oxidoreductase (cytochrome b-c1 complex, complex III, CIII) and cytochrome c oxidase (complex IV, CIV), that cooperate to transfer electrons derived from NADH and succinate to molecular oxygen, creating an electrochemical gradient over the inner membrane that drives transmembrane transport and the ATP synthase. Cytochrome c oxidase is the component of the respiratory chain that catalyzes the reduction of oxygen to water. Electrons originating from reduced cytochrome c in the intermembrane space (IMS) are transferred via the dinuclear copper A center (CU(A)) of subunit 2 and heme A of subunit 1 to the active site in subunit 1, a binuclear center (BNC) formed by heme A3 and copper B (CU(B)). The BNC reduces molecular oxygen to 2 water molecules using 4 electrons from cytochrome c in the IMS and 4 protons from the mitochondrial matrix. The polypeptide is Cytochrome c oxidase subunit 2 (cox2) (Emericella nidulans (Aspergillus nidulans)).